Reading from the N-terminus, the 451-residue chain is Methionine aminopeptidase 2-2 (451 aa).

The tract at residues 1 to 101 (MAAKVADDVA…IDEVFPNDSY (101 aa)) is disordered. A compositionally biased stretch (acidic residues) spans 37–51 (EHEDSDDDNEAEEGA). Basic residues predominate over residues 60-73 (KKKKKRKPRKKKKA). Histidine 204 provides a ligand contact to substrate. A divalent metal cation-binding residues include aspartate 224, aspartate 235, and histidine 304. Residue histidine 312 coordinates substrate. Positions 337 and 432 each coordinate a divalent metal cation.

The protein belongs to the peptidase M24A family. Methionine aminopeptidase eukaryotic type 2 subfamily. It depends on Co(2+) as a cofactor. Zn(2+) is required as a cofactor. Requires Mn(2+) as cofactor. Fe(2+) serves as cofactor.

The protein resides in the cytoplasm. The enzyme catalyses Release of N-terminal amino acids, preferentially methionine, from peptides and arylamides.. In terms of biological role, cotranslationally removes the N-terminal methionine from nascent proteins. The N-terminal methionine is often cleaved when the second residue in the primary sequence is small and uncharged (Met-Ala-, Cys, Gly, Pro, Ser, Thr, or Val). This is Methionine aminopeptidase 2-2 from Pyrenophora tritici-repentis (strain Pt-1C-BFP) (Wheat tan spot fungus).